Reading from the N-terminus, the 71-residue chain is Translation initiation factor IF-1 (71 aa).

The 71-residue stretch at 1 to 71 (MSKDDLIQFT…LTKGRVIHRH (71 aa)) folds into the S1-like domain.

The protein belongs to the IF-1 family. As to quaternary structure, component of the 30S ribosomal translation pre-initiation complex which assembles on the 30S ribosome in the order IF-2 and IF-3, IF-1 and N-formylmethionyl-tRNA(fMet); mRNA recruitment can occur at any time during PIC assembly.

The protein resides in the cytoplasm. Its function is as follows. One of the essential components for the initiation of protein synthesis. Stabilizes the binding of IF-2 and IF-3 on the 30S subunit to which N-formylmethionyl-tRNA(fMet) subsequently binds. Helps modulate mRNA selection, yielding the 30S pre-initiation complex (PIC). Upon addition of the 50S ribosomal subunit IF-1, IF-2 and IF-3 are released leaving the mature 70S translation initiation complex. The sequence is that of Translation initiation factor IF-1 from Rickettsia conorii (strain ATCC VR-613 / Malish 7).